Consider the following 147-residue polypeptide: METLIAISRWLAKQHVVTWCVQQEGELWCANAFYLFDAQKVAFYILTEEKTRHAQMSGPQAAVAGTVNGQPKTVALIRGVQFKGEIRRLEGEESDLARKAYNRRFPVARMLSAPVWEIRLDEIKFTDNTLGFGKKMIWLRDSGTEQA.

The protein belongs to the UPF0306 family.

In Escherichia coli (strain K12 / MC4100 / BW2952), this protein is UPF0306 protein YhbP.